A 166-amino-acid chain; its full sequence is Small ribosomal subunit protein uS4 (166 aa).

The S4 RNA-binding domain maps to 102–164 (RRLQTIVWRK…HPSCLEVEKE (63 aa)).

It belongs to the universal ribosomal protein uS4 family. Part of the 30S ribosomal subunit. Contacts protein S5. The interaction surface between S4 and S5 is involved in control of translational fidelity.

In terms of biological role, one of the primary rRNA binding proteins, it binds directly to 16S rRNA where it nucleates assembly of the body of the 30S subunit. Its function is as follows. With S5 and S12 plays an important role in translational accuracy. This chain is Small ribosomal subunit protein uS4, found in Korarchaeum cryptofilum (strain OPF8).